We begin with the raw amino-acid sequence, 1740 residues long: Vitamin B12-dependent ribonucleoside-diphosphate reductase (1740 aa).

The ATP-cone domain occupies 4–96 (EKVMKRDGRI…LYRKKKAEIR (93 aa)). Residues Thr-257, 272 to 273 (AC), and Gly-301 each bind substrate. Cys-273 and Cys-1308 are oxidised to a cystine. A DOD-type homing endonuclease 1 domain is found at 443-582 (LAGFIAGDGC…VTHYLNALGI (140 aa)). The active-site Proton acceptor is Asn-913. 913 to 914 (NP) is a binding site for substrate. A DOD-type homing endonuclease 2 domain is found at 1063-1194 (VLGWFIGDGY…VQDLLLLFGI (132 aa)). Catalysis depends on Cys-1297, which acts as the Cysteine radical intermediate. Substrate is bound by residues 1297 to 1299 (CGE) and 1471 to 1475 (PTGSV). Catalysis depends on Glu-1299, which acts as the Proton acceptor.

This sequence belongs to the ribonucleoside diphosphate reductase class-2 family. Adenosylcob(III)alamin serves as cofactor. This protein undergoes a protein self splicing that involves a post-translational excision of the intervening region (intein) followed by peptide ligation.

The enzyme catalyses a 2'-deoxyribonucleoside 5'-diphosphate + [thioredoxin]-disulfide + H2O = a ribonucleoside 5'-diphosphate + [thioredoxin]-dithiol. Functionally, provides the precursors necessary for DNA synthesis. Catalyzes the biosynthesis of deoxyribonucleotides from the corresponding ribonucleotides. This Pyrococcus furiosus (strain ATCC 43587 / DSM 3638 / JCM 8422 / Vc1) protein is Vitamin B12-dependent ribonucleoside-diphosphate reductase (rnr).